The chain runs to 425 residues: Potassium/proton antiporter CemA (425 aa).

The chain crosses the membrane as a helical span at residues 89–109; that stretch reads LFLTTVKCLFILLFVPLGINF. Residues 159-278 are insert; it reads LSENQIFFGL…KTDFASVFRT (120 aa). A disordered region spans residues 173–192; sequence STFPSSEKSQKSEHFSNQDE. Basic and acidic residues predominate over residues 180–192; that stretch reads KSQKSEHFSNQDE. Helical transmembrane passes span 300–320, 350–370, and 386–406; these read IEAI…CYLL, ILFI…ELFF, and IFLL…YLIF.

Belongs to the CemA family.

The protein localises to the plastid. It is found in the chloroplast inner membrane. It carries out the reaction K(+)(in) + H(+)(out) = K(+)(out) + H(+)(in). In terms of biological role, contributes to K(+)/H(+) antiport activity by supporting proton efflux to control proton extrusion and homeostasis in chloroplasts in a light-dependent manner to modulate photosynthesis. Prevents excessive induction of non-photochemical quenching (NPQ) under continuous-light conditions. Indirectly promotes efficient inorganic carbon uptake into chloroplasts. The chain is Potassium/proton antiporter CemA from Tetradesmus obliquus (Green alga).